The sequence spans 177 residues: Cytidylate kinase (177 aa).

Position 8–16 (8–16 (GPPGGGKTT)) interacts with ATP.

Belongs to the cytidylate kinase family. Type 2 subfamily.

The protein localises to the cytoplasm. The enzyme catalyses CMP + ATP = CDP + ADP. It catalyses the reaction dCMP + ATP = dCDP + ADP. This chain is Cytidylate kinase, found in Staphylothermus marinus (strain ATCC 43588 / DSM 3639 / JCM 9404 / F1).